Consider the following 394-residue polypeptide: Chorismate synthase (394 aa).

R62 lines the NADP(+) pocket. FMN is bound by residues 144 to 146, G307, 322 to 326, and R349; these read RAS and KPTPT.

The protein belongs to the chorismate synthase family. In terms of assembly, homotetramer. FMNH2 serves as cofactor.

It carries out the reaction 5-O-(1-carboxyvinyl)-3-phosphoshikimate = chorismate + phosphate. It participates in metabolic intermediate biosynthesis; chorismate biosynthesis; chorismate from D-erythrose 4-phosphate and phosphoenolpyruvate: step 7/7. Functionally, catalyzes the anti-1,4-elimination of the C-3 phosphate and the C-6 proR hydrogen from 5-enolpyruvylshikimate-3-phosphate (EPSP) to yield chorismate, which is the branch point compound that serves as the starting substrate for the three terminal pathways of aromatic amino acid biosynthesis. This reaction introduces a second double bond into the aromatic ring system. The polypeptide is Chorismate synthase (Acetivibrio thermocellus (strain ATCC 27405 / DSM 1237 / JCM 9322 / NBRC 103400 / NCIMB 10682 / NRRL B-4536 / VPI 7372) (Clostridium thermocellum)).